The primary structure comprises 605 residues: Leucine aminopeptidase (605 aa).

A peptide is bound by residues K374, D379, and K386. Zn(2+) is bound by residues K374 and D379. Residues N384–S401 form an L13 loop region. K386 is an active-site residue. The Zn(2+) site is built by D394, M396, D399, D459, and E461. Positions 399 and 459 each coordinate a peptide. R463 is a catalytic residue.

The protein belongs to the peptidase M17 family. Homohexamer composed of dimer of trimers. Both the identity and concentration of metal ions available dictate the extent to which oligomerization occurs; Mn(2+) and Co(2+) induces oligomerization, whereas Mg(2+) has no effect, and Zn(2+) causes irreversible protein aggregation in vitro. Requires Zn(2+) as cofactor.

The protein resides in the cytoplasm. The enzyme catalyses Release of an N-terminal amino acid, Xaa-|-Yaa-, in which Xaa is preferably Leu, but may be other amino acids including Pro although not Arg or Lys, and Yaa may be Pro. Amino acid amides and methyl esters are also readily hydrolyzed, but rates on arylamides are exceedingly low.. It carries out the reaction L-cysteinylglycine + H2O = L-cysteine + glycine. Its activity is regulated as follows. Oligomerization is required for catalytic activity and is metal-dependent. The type of metal that binds the 2 metal binding sites influences catalytic activity and substrate specificity. In vitro, activated by Co(2+), Mn(2+), Ni(2+), Mg(2+) and Zn(2+) with decreasing strength. Occupancy of the site 2 is essential and sufficient for activating the enzyme but occupation of the 2 sites is necessary for full catalytic activity. Inhibited by fungal metabolite bestatin. Inhibited by Phe-Naphthyl (PNAP). Its function is as follows. Aminopeptidase which preferentially cleaves leucine residues from the N-terminus of peptides. Also, has some activity towards tryptophan and methionine and to a lesser extent towards phenylalanine. Has very low activity or no activity towards the other amino acids. In addition, cleaves the Cys-Gly dipeptide, probably as part of the glutathione regulation pathway; cleavage only occurs in the presence of Mn(2+). During the asexual blood stage, plays a role in the final step of host hemoglobin catabolism, by cleaving hemoglobin-derived oligopeptides providing a source of amino acids for the parasite protein synthesis and for the maintenance of osmotic homeostasis. During the asexual blood stage, may also play a role during the ring-trophozoite transition. The sequence is that of Leucine aminopeptidase from Plasmodium falciparum (isolate 3D7).